The primary structure comprises 342 residues: Zinc transporter ZIP11 (342 aa).

7 helical membrane-spanning segments follow: residues 12–32, 44–64, 72–92, 194–214, 263–285, 290–307, and 322–342; these read LLGT…VFVF, LGFA…APAV, GFGA…AAFV, IALL…AVGV, FWYG…FAVV, ILPY…YVVM, and LASW…VGLG.

It belongs to the ZIP transporter (TC 2.A.5) family.

Its subcellular location is the cell membrane. The protein localises to the nucleus. It localises to the cytoplasm. It is found in the golgi apparatus. The catalysed reaction is Zn(2+)(in) = Zn(2+)(out). The enzyme catalyses Cu(2+)(in) = Cu(2+)(out). Functionally, zinc importer that regulates cytosolic zinc concentrations either via zinc influx from the extracellular compartment or efflux from intracellular organelles such as Golgi apparatus. May transport copper ions as well. The transport mechanism remains to be elucidated. The polypeptide is Zinc transporter ZIP11 (SLC39A11) (Homo sapiens (Human)).